The chain runs to 54 residues: Ovomucoid (54 aa).

One can recognise a Kazal-like domain in the interval 4–54 (VDCSDYPKPVCPLDYMPLCGSDSKTYSNKCNFCNAVVESSGTLTLRHFGKC). 3 cysteine pairs are disulfide-bonded: C6/C36, C14/C33, and C22/C54.

Post-translationally, this is the only ovomucoid third domain known to be not glycosylated.

The protein localises to the secreted. This chain is Ovomucoid, found in Struthio camelus (Common ostrich).